The following is a 149-amino-acid chain: MATKLDYEDAVFYFVDDDKICSRDSIIDLIDEYITWRNHVIVFNKDITSCGRLYKELMKFDDVAIRYYGIDKINEIVEAMSEGDHYINFTKVHDQESLFATIGICAKITEHWGYKKISESRFQSLGNITDLMTDDNINILILFLEKKLN.

This sequence belongs to the orthopoxvirus OPG044 family. Interacts with DDX3; this interaction inhibits DDX3 and suppresses DDX3-mediated IFN-beta promoter induction. Interacts with TRAF6 and IRAK2; these interactions suppress TLR-dependent NF-KappaB activation.

Its subcellular location is the host cytoplasm. In terms of biological role, virulence factor that affects the acute immune response to infection. Bcl-2-like protein which, through its interaction with the DEAD box RNA helicase DDX3X/DDX3, prevents TBK1/IKKepsilon-mediated IRF3 activation. Contributes to virulence by binding to the host TRAF6 and IRAK2 and preventing host NF-kappa-B activation. In Homo sapiens (Human), this protein is Protein K7 (OPG044).